A 70-amino-acid chain; its full sequence is Small, acid-soluble spore protein I (70 aa).

It belongs to the SspI family.

It localises to the spore core. The protein is Small, acid-soluble spore protein I of Bacillus licheniformis (strain ATCC 14580 / DSM 13 / JCM 2505 / CCUG 7422 / NBRC 12200 / NCIMB 9375 / NCTC 10341 / NRRL NRS-1264 / Gibson 46).